A 430-amino-acid chain; its full sequence is Histidinol dehydrogenase (430 aa).

NAD(+) is bound by residues Tyr-129, Gln-190, and Asn-213. 3 residues coordinate substrate: Ser-236, Gln-258, and His-261. Residues Gln-258 and His-261 each coordinate Zn(2+). Active-site proton acceptor residues include Glu-326 and His-327. Substrate is bound by residues His-327, Asp-360, Glu-414, and His-419. Asp-360 contributes to the Zn(2+) binding site. His-419 is a Zn(2+) binding site.

The protein belongs to the histidinol dehydrogenase family. The cofactor is Zn(2+).

It carries out the reaction L-histidinol + 2 NAD(+) + H2O = L-histidine + 2 NADH + 3 H(+). It participates in amino-acid biosynthesis; L-histidine biosynthesis; L-histidine from 5-phospho-alpha-D-ribose 1-diphosphate: step 9/9. In terms of biological role, catalyzes the sequential NAD-dependent oxidations of L-histidinol to L-histidinaldehyde and then to L-histidine. The chain is Histidinol dehydrogenase from Gluconobacter oxydans (strain 621H) (Gluconobacter suboxydans).